A 70-amino-acid chain; its full sequence is Large ribosomal subunit protein bL31 (70 aa).

Residues Cys-16, Cys-18, Cys-37, and Cys-40 each coordinate Zn(2+).

It belongs to the bacterial ribosomal protein bL31 family. Type A subfamily. Part of the 50S ribosomal subunit. Requires Zn(2+) as cofactor.

Its function is as follows. Binds the 23S rRNA. This Shewanella halifaxensis (strain HAW-EB4) protein is Large ribosomal subunit protein bL31.